The primary structure comprises 1161 residues: Hamartin (1161 aa).

Residue Lys-30 forms a Glycyl lysine isopeptide (Lys-Gly) (interchain with G-Cter in ubiquitin) linkage. Disordered regions lie at residues 296–336 (PYVD…PSTR) and 353–591 (CGMT…QRGV). Over residues 303-336 (SYGGSTSTPSSSSRLMLFSPPGQLPQSLSSPSTR) the composition is skewed to low complexity. Residues 393 to 402 (TSPPPAPPCP) show a composition bias toward pro residues. The segment at 403-784 (QDDCVHGSAA…QIRQLQHDRE (382 aa)) is mediates interaction with WDR45B. Over residues 471-484 (EKDKEEAAISKELS) the composition is skewed to basic and acidic residues. Phosphoserine is present on residues Ser-484, Ser-502, Ser-508, Ser-518, Ser-592, and Ser-595. A compositionally biased stretch (polar residues) spans 509–529 (LSGSQRKTHSAASGTQGSSVN). Coiled coils occupy residues 721–849 (IRAA…NRQL), 879–917 (TAYR…AKKD), and 967–991 (EKDG…ERLD). 2 disordered regions span residues 1003-1077 (GHNE…SLPS) and 1092-1161 (NKSE…PEHS). Residues 1004–1017 (HNEEASGHNGETRT) are compositionally biased toward basic and acidic residues. Residues 1026 to 1043 (SCGGRVTGGSSSSSSELS) are compositionally biased toward low complexity. The span at 1064–1077 (PSSSIPTTVGSLPS) shows a compositional bias: polar residues. Phosphoserine is present on Ser-1094. Positions 1103–1113 (VTMSSSSLSET) are enriched in low complexity. 2 stretches are compositionally biased toward basic and acidic residues: residues 1114 to 1124 (LKTELGKDSGT) and 1152 to 1161 (DYNETHPEHS).

In terms of assembly, component of the TSC-TBC complex (also named Rhebulator complex), composed of 2 molecules of TSC1, 2 molecules of TSC2 and 1 molecule of TBC1D7. Probably forms a complex composed of chaperones HSP90 and HSP70, co-chaperones STIP1/HOP, CDC37, PPP5C, PTGES3/p23, TSC1 and client protein TSC2. Forms a complex composed of chaperones HSP90 and HSP70, co-chaperones CDC37, PPP5C, TSC1 and client protein TSC2, CDK4, AKT, RAF1 and NR3C1; this complex does not contain co-chaperones STIP1/HOP and PTGES3/p23. Forms a complex containing HSP90AA1, TSC1 and TSC2; TSC1 is required to recruit TCS2 to the complex. Interacts (via C-terminus) with the closed form of HSP90AA1 (via the middle domain and TPR repeat-binding motif). Interacts with DOCK7. Interacts with FBXW5. Interacts with WDR45B. Interacts with RPAP3 and URI1. Phosphorylation at Ser-502 does not affect interaction with TSC2. In terms of processing, 'Lys-63'-linked ubiquitinated at Lys-30 by PELI1; the ubiquitination promotes TSC1/TSC2 complex stability.

It localises to the lysosome membrane. The protein resides in the cytoplasm. It is found in the cytosol. Its function is as follows. Non-catalytic component of the TSC-TBC complex, a multiprotein complex that acts as a negative regulator of the canonical mTORC1 complex, an evolutionarily conserved central nutrient sensor that stimulates anabolic reactions and macromolecule biosynthesis to promote cellular biomass generation and growth. The TSC-TBC complex acts as a GTPase-activating protein (GAP) for the small GTPase RHEB, a direct activator of the protein kinase activity of mTORC1. In absence of nutrients, the TSC-TBC complex inhibits mTORC1, thereby preventing phosphorylation of ribosomal protein S6 kinase (RPS6KB1 and RPS6KB2) and EIF4EBP1 (4E-BP1) by the mTORC1 signaling. The TSC-TBC complex is inactivated in response to nutrients, relieving inhibition of mTORC1. Within the TSC-TBC complex, TSC1 stabilizes TSC2 and prevents TSC2 self-aggregation. Involved in microtubule-mediated protein transport via its ability to regulate mTORC1 signaling. Also acts as a co-chaperone for HSP90AA1 facilitating HSP90AA1 chaperoning of protein clients such as kinases, TSC2 and glucocorticoid receptor NR3C1. Increases ATP binding to HSP90AA1 and inhibits HSP90AA1 ATPase activity. Competes with the activating co-chaperone AHSA1 for binding to HSP90AA1, thereby providing a reciprocal regulatory mechanism for chaperoning of client proteins. Recruits TSC2 to HSP90AA1 and stabilizes TSC2 by preventing the interaction between TSC2 and ubiquitin ligase HERC1. In Mus musculus (Mouse), this protein is Hamartin.